The primary structure comprises 228 residues: 7-cyano-7-deazaguanine synthase (228 aa).

8–18 serves as a coordination point for ATP; it reads LSGGLDSTTCL. The Zn(2+) site is built by cysteine 188, cysteine 198, cysteine 201, and cysteine 204.

This sequence belongs to the QueC family. Zn(2+) is required as a cofactor.

The catalysed reaction is 7-carboxy-7-deazaguanine + NH4(+) + ATP = 7-cyano-7-deazaguanine + ADP + phosphate + H2O + H(+). It functions in the pathway purine metabolism; 7-cyano-7-deazaguanine biosynthesis. In terms of biological role, catalyzes the ATP-dependent conversion of 7-carboxy-7-deazaguanine (CDG) to 7-cyano-7-deazaguanine (preQ(0)). This Legionella pneumophila subsp. pneumophila (strain Philadelphia 1 / ATCC 33152 / DSM 7513) protein is 7-cyano-7-deazaguanine synthase.